Reading from the N-terminus, the 877-residue chain is Phosphoenolpyruvate carboxylase (877 aa).

Catalysis depends on residues histidine 138 and lysine 543.

This sequence belongs to the PEPCase type 1 family. It depends on Mg(2+) as a cofactor.

The enzyme catalyses oxaloacetate + phosphate = phosphoenolpyruvate + hydrogencarbonate. Forms oxaloacetate, a four-carbon dicarboxylic acid source for the tricarboxylic acid cycle. This chain is Phosphoenolpyruvate carboxylase, found in Aeromonas salmonicida (strain A449).